The following is a 174-amino-acid chain: ATP-dependent protease subunit HslV (174 aa).

The active site involves threonine 2. Residues glycine 157, cysteine 160, and threonine 163 each contribute to the Na(+) site.

It belongs to the peptidase T1B family. HslV subfamily. In terms of assembly, a double ring-shaped homohexamer of HslV is capped on each side by a ring-shaped HslU homohexamer. The assembly of the HslU/HslV complex is dependent on binding of ATP.

The protein resides in the cytoplasm. It catalyses the reaction ATP-dependent cleavage of peptide bonds with broad specificity.. Allosterically activated by HslU binding. Protease subunit of a proteasome-like degradation complex believed to be a general protein degrading machinery. The sequence is that of ATP-dependent protease subunit HslV from Yersinia enterocolitica serotype O:8 / biotype 1B (strain NCTC 13174 / 8081).